The chain runs to 196 residues: Aequorin-1 (196 aa).

A propeptide spanning residues 1–7 (MTSEQYS) is cleaved from the precursor. 4 consecutive EF-hand domains span residues 18-53 (KWIG…IVIN), 54-108 (NLGA…SKNQ), 111-146 (LIRL…DGII), and 147-182 (QSSE…FWYT). Residues aspartate 31, asparagine 33, asparagine 35, arginine 37, and glutamate 42 each contribute to the Ca(2+) site. 3 may interact with the chromophore regions span residues 47–57 (ASDIVINNLGA), 62–72 (AKRHKDAVEAF), and 107–117 (NQITLIRLWGD). Aspartate 124, aspartate 126, asparagine 128, glutamate 135, aspartate 160, aspartate 162, serine 164, glutamine 166, and glutamate 171 together coordinate Ca(2+).

Belongs to the aequorin family. The reduction of the disulfide bond is necessary to regenerate aequorin from apoaequorin.

In terms of biological role, ca(2+)-dependent bioluminescence photoprotein. Displays an emission peak at 470 nm (blue light). Trace amounts of calcium ion trigger the intramolecular oxidation of the chromophore, coelenterazine into coelenteramide and CO(2) with the concomitant emission of light. This chain is Aequorin-1, found in Aequorea victoria (Water jellyfish).